Consider the following 436-residue polypeptide: Nicotinate phosphoribosyltransferase (436 aa).

Residue histidine 231 is modified to Phosphohistidine; by autocatalysis.

This sequence belongs to the NAPRTase family. Transiently phosphorylated on a His residue during the reaction cycle. Phosphorylation strongly increases the affinity for substrates and increases the rate of nicotinate D-ribonucleotide production. Dephosphorylation regenerates the low-affinity form of the enzyme, leading to product release.

The enzyme catalyses nicotinate + 5-phospho-alpha-D-ribose 1-diphosphate + ATP + H2O = nicotinate beta-D-ribonucleotide + ADP + phosphate + diphosphate. Its pathway is cofactor biosynthesis; NAD(+) biosynthesis; nicotinate D-ribonucleotide from nicotinate: step 1/1. In terms of biological role, catalyzes the synthesis of beta-nicotinate D-ribonucleotide from nicotinate and 5-phospho-D-ribose 1-phosphate at the expense of ATP. This Vibrio campbellii (strain ATCC BAA-1116) protein is Nicotinate phosphoribosyltransferase.